A 294-amino-acid chain; its full sequence is HTH-type transcriptional regulator ClcR (294 aa).

Positions 1 to 58 (MEFRQLRYFIAVAEEGNIGAAARRLHISQPPITRQIQALEQDLGVVLFERTHRGVELT) constitute an HTH lysR-type domain. Positions 18 to 37 (IGAAARRLHISQPPITRQIQ) form a DNA-binding region, H-T-H motif.

The protein belongs to the LysR transcriptional regulatory family.

It is found in the cytoplasm. Functionally, involved in regulation of chlorinated catechol metabolism. Transcriptional activator of the clcABD chlorocatechol oxidative operon. The polypeptide is HTH-type transcriptional regulator ClcR (clcR) (Pseudomonas putida (Arthrobacter siderocapsulatus)).